The primary structure comprises 575 residues: Sclareol synthase, chloroplastic (575 aa).

The transit peptide at 1–51 directs the protein to the chloroplast; it reads MSLAFNVGVTPFSGQRVGSRKEKFPVQGFPVTTPNRSRLIVNCSLTTIDFM. Mg(2+) is bound by residues Asp-329, Asp-333, Asn-473, Ser-477, and Glu-481. The DDXXD motif signature appears at 329-333; sequence DDFFD.

The protein belongs to the terpene synthase family.

It is found in the plastid. Its subcellular location is the chloroplast. It carries out the reaction 8-hydroxycopalyl diphosphate + H2O = sclareol + diphosphate. It functions in the pathway secondary metabolite biosynthesis; terpenoid biosynthesis. Functionally, involved in the biosynthesis of labdane-type diterpenoid including sclareol, a diterpene-diol that is used as fragrance and flavoring, and has anticancer effects (able to kill leukemic and colon cancer cells by apoptosis). Sclareol can also be used as synthesis precursor of ambergris substitution fragance products such as ambrox. Terpene synthase that catalyzes the conversion of 8-hydroxy-copalyl diphosphate to sclareol. The chain is Sclareol synthase, chloroplastic from Salvia sclarea (Clary sage).